Consider the following 859-residue polypeptide: Mycobactin import ATP-binding/permease protein IrtA (859 aa).

The Cytoplasmic segment spans residues 1-292; the sequence is MARGLQGVML…SRLLAPLKLP (292 aa). The FAD-binding FR-type domain maps to 15–122; that stretch reads ARDHTATVIE…MSLMGSSRFD (108 aa). Residues 70 to 73, 87 to 91, and 97 to 98 contribute to the FAD site; these read RAYT, DVVLH, and AS. The tract at residues 247-267 is disordered; sequence HRATEPAATEPEVGAAPQPES. The chain crosses the membrane as a helical span at residues 293–313; it reads LVLSGVLAALVTLAQLAPFVL. Residues 293–575 enclose the ABC transmembrane type-1 domain; the sequence is LVLSGVLAAL…IAYGLGGLRT (283 aa). At 314–334 the chain is on the periplasmic side; that stretch reads LVELSRLLVSGAGAHRLFTVG. The helical transmembrane segment at 335 to 355 threads the bilayer; sequence FAAVGLLGTGALLAAALTLWL. Residues 356–408 are Cytoplasmic-facing; that stretch reads HVIDARFARALRLRLLSKLSRLPLGWFTSRGSGSIKKLVTDDTLALHYLVTHA. A helical transmembrane segment spans residues 409-429; sequence VPDAVAAVVAPVGVLVYLFVV. Residues 430-432 lie on the Periplasmic side of the membrane; the sequence is DWR. A helical membrane pass occupies residues 433 to 453; it reads VALVLFGPVLVYLTITSSLTI. Residues 454–519 are Cytoplasmic-facing; that stretch reads QSGPRIVQAQ…PLAGKKTLMD (66 aa). The helical transmembrane segment at 520–540 threads the bilayer; that stretch reads LATRPATFLWLIAATGTLLVA. Topologically, residues 541 to 548 are periplasmic; the sequence is THRMDPVN. The helical transmembrane segment at 549–569 threads the bilayer; that stretch reads LLPFMFLGTTFGARLLGIAYG. The Cytoplasmic portion of the chain corresponds to 570–859; the sequence is LGGLRTGLLA…AVAAAQDGTR (290 aa). Positions 610-843 constitute an ABC transporter domain; sequence VVFDHVTFGY…GGRYCRLWDT (234 aa). Residue 643–650 coordinates ATP; the sequence is GPSGSGKS.

It belongs to the ABC transporter superfamily. Siderophore-Fe(3+) uptake transporter (SIUT) (TC 3.A.1.21) family. In terms of assembly, forms a heterodimer with IrtB. Requires FAD as cofactor.

It is found in the cell inner membrane. Part of the ABC transporter complex IrtAB involved in the import of iron-bound mycobactin (Fe-MBT) and carboxymycobactin (Fe-cMBT). Mycobactins are then reduced by the siderophore interaction domain to facilitate iron release in the bacterial cell. Transmembrane domains (TMD) form a pore in the membrane and the ATP-binding domain (NBD) is responsible for energy generation. Required for replication in human macrophages and in mouse lungs. The chain is Mycobactin import ATP-binding/permease protein IrtA (irtA) from Mycobacterium tuberculosis (strain ATCC 25618 / H37Rv).